The following is a 266-amino-acid chain: MKTFAAYVITACLSSTALASSITENTSWNKEFSAEAVNGVFVLCKSSSKSCATNNLARASKEYLPASTFKIPNAIIGLETGVIKNEHQVFKWDGKPRAMKQWERDLSLRGAIQVSAVPVFQQIAREVGEVRMQKYLKKFSYGNQNISGGIDKFWLEDQLRISAVNQVEFLESLFLNKLSASKENQLIVKEALVTEAAPEYLVHSKTGFSGVGTESNPGVAWWVGWVEKGTEVYFFAFNMDIDNENKLPLRKSIPTKIMASEGIIGG.

The N-terminal stretch at 1–20 (MKTFAAYVITACLSSTALAS) is a signal peptide. Catalysis depends on S67, which acts as the Acyl-ester intermediate. At K70 the chain carries N6-carboxylysine. Position 205-207 (205-207 (KTG)) interacts with substrate.

The protein belongs to the class-D beta-lactamase family.

The catalysed reaction is a beta-lactam + H2O = a substituted beta-amino acid. This is Beta-lactamase OXA-19 (bla) from Pseudomonas aeruginosa.